A 127-amino-acid polypeptide reads, in one-letter code: Protein ApaG (127 aa).

The region spanning 3 to 127 is the ApaG domain; the sequence is ESEKYRIEVE…FMLAMPRVLH (125 aa).

This is Protein ApaG from Aromatoleum aromaticum (strain DSM 19018 / LMG 30748 / EbN1) (Azoarcus sp. (strain EbN1)).